The primary structure comprises 439 residues: Putrescine transporter PotE (439 aa).

12 consecutive transmembrane segments (helical) span residues 10–30, 40–60, 91–111, 114–134, 152–172, 186–206, 225–245, 276–296, 321–341, 354–374, 387–407, and 410–430; these read GVVQ…IIML, ISII…WAFA, TYGV…VGYG, LLGA…VLWI, ITVW…WFWF, APFF…FLGL, IAVL…TNVI, VIMA…QFTI, APVQ…LMTI, NLAV…LVII, VANF…YSSG, and AMLY…LVSP.

This sequence belongs to the amino acid-polyamine-organocation (APC) superfamily. Basic amino acid/polyamine antiporter (APA) (TC 2.A.3.2) family.

The protein resides in the cell inner membrane. The enzyme catalyses putrescine(in) + H(+)(in) = putrescine(out) + H(+)(out). The catalysed reaction is putrescine(in) + L-ornithine(out) = putrescine(out) + L-ornithine(in). Its function is as follows. Catalyzes both the uptake and excretion of putrescine. The uptake of putrescine is dependent on the membrane potential and the excretion involves putrescine-ornithine antiporter activity. The protein is Putrescine transporter PotE of Escherichia coli O6:H1 (strain CFT073 / ATCC 700928 / UPEC).